A 54-amino-acid chain; its full sequence is Ovomucoid (54 aa).

The region spanning 4–54 is the Kazal-like domain; the sequence is VDCSDYPKPACTLEYMPLCGSDNKTYGNRCNFCNAVVDSNGTLTLSHFGKC. 3 cysteine pairs are disulfide-bonded: cysteine 6/cysteine 36, cysteine 14/cysteine 33, and cysteine 22/cysteine 54. The N-linked (GlcNAc...) asparagine glycan is linked to asparagine 43.

The protein localises to the secreted. This is Ovomucoid from Dendrocygna viduata (White-faced whistling-duck).